A 309-amino-acid chain; its full sequence is Homoserine O-succinyltransferase (309 aa).

Catalysis depends on Cys142, which acts as the Acyl-thioester intermediate. Substrate-binding residues include Lys163 and Ser192. Residue His235 is the Proton acceptor of the active site. Glu237 is an active-site residue. Residue Arg249 coordinates substrate.

This sequence belongs to the MetA family. Homodimer.

Its subcellular location is the cytoplasm. It carries out the reaction L-homoserine + succinyl-CoA = O-succinyl-L-homoserine + CoA. Its pathway is amino-acid biosynthesis; L-methionine biosynthesis via de novo pathway; O-succinyl-L-homoserine from L-homoserine: step 1/1. In terms of biological role, transfers a succinyl group from succinyl-CoA to L-homoserine, forming succinyl-L-homoserine. The polypeptide is Homoserine O-succinyltransferase (Escherichia fergusonii (strain ATCC 35469 / DSM 13698 / CCUG 18766 / IAM 14443 / JCM 21226 / LMG 7866 / NBRC 102419 / NCTC 12128 / CDC 0568-73)).